A 40-amino-acid chain; its full sequence is Photosystem II reaction center protein J (40 aa).

The chain crosses the membrane as a helical span at residues 8–28 (IPLWLVGTVTGTLVIGLMGIF).

Belongs to the PsbJ family. In terms of assembly, PSII is composed of 1 copy each of membrane proteins PsbA, PsbB, PsbC, PsbD, PsbE, PsbF, PsbH, PsbI, PsbJ, PsbK, PsbL, PsbM, PsbT, PsbX, PsbY, PsbZ, Psb30/Ycf12, at least 3 peripheral proteins of the oxygen-evolving complex and a large number of cofactors. It forms dimeric complexes.

It localises to the plastid. It is found in the chloroplast thylakoid membrane. Functionally, one of the components of the core complex of photosystem II (PSII). PSII is a light-driven water:plastoquinone oxidoreductase that uses light energy to abstract electrons from H(2)O, generating O(2) and a proton gradient subsequently used for ATP formation. It consists of a core antenna complex that captures photons, and an electron transfer chain that converts photonic excitation into a charge separation. This chain is Photosystem II reaction center protein J, found in Psilotum nudum (Whisk fern).